The primary structure comprises 651 residues: Chaperone protein HtpG (651 aa).

Residues 1–353 are a; substrate-binding; the sequence is MAAHVEQLEF…AQDMSLNVSR (353 aa). Positions 354 to 569 are b; it reads EILQQDRQIR…TFGITPALAR (216 aa). The tract at residues 570-651 is c; that stretch reads MYRASGQPVP…RLTRTVGDQT (82 aa).

The protein belongs to the heat shock protein 90 family. Homodimer.

The protein resides in the cytoplasm. Its function is as follows. Molecular chaperone. Has ATPase activity. The polypeptide is Chaperone protein HtpG (Mycolicibacterium vanbaalenii (strain DSM 7251 / JCM 13017 / BCRC 16820 / KCTC 9966 / NRRL B-24157 / PYR-1) (Mycobacterium vanbaalenii)).